The sequence spans 260 residues: Cytosolic Fe-S cluster assembly factor Nubp2 homolog (260 aa).

14–21 (GKGGVGKS) provides a ligand contact to ATP. Residues cysteine 188 and cysteine 191 each contribute to the [4Fe-4S] cluster site.

This sequence belongs to the Mrp/NBP35 ATP-binding proteins family. NUBP2/CFD1 subfamily. In terms of assembly, heterotetramer of 2 Nubp1 and 2 Nubp2 chains. The cofactor is [4Fe-4S] cluster.

The protein localises to the cytoplasm. Component of the cytosolic iron-sulfur (Fe/S) protein assembly (CIA) machinery. Required for maturation of extramitochondrial Fe-S proteins. The Nubp1-Nubp2 heterotetramer forms a Fe-S scaffold complex, mediating the de novo assembly of an Fe-S cluster and its transfer to target apoproteins. The protein is Cytosolic Fe-S cluster assembly factor Nubp2 homolog of Drosophila sechellia (Fruit fly).